Consider the following 372-residue polypeptide: Envelope phospholipase OPG057 (372 aa).

The YPPL signature appears at 153 to 156; it reads YPPL. S-palmitoyl cysteine; by host attachment occurs at residues cysteine 185 and cysteine 186. The region spanning 307–334 is the PLD phosphodiesterase domain; the sequence is FTIQNNTKLLIVDDEYVHITSANFDGTH.

The protein belongs to the orthopoxvirus OPG057 family. Interacts with protein OPG190. In terms of processing, palmitoylated. Attachment of the palmitate moiety is essential for correct intracellular targeting and protein function.

Its subcellular location is the virion membrane. It localises to the host Golgi apparatus. The protein localises to the host trans-Golgi network. The protein resides in the host endoplasmic reticulum membrane. The enzyme catalyses a 1,2-diacyl-sn-glycero-3-phosphocholine + H2O = a 1,2-diacyl-sn-glycero-3-phosphate + choline + H(+). In terms of biological role, major envelope protein that plays a role in the biogenesis of the viral double membrane and in egress of virus from the host cell. Produces the wrapped form of virus that is required for cell-to-cell spread. Acts as a lipase with broad specificity including phospholipase C, phospholipase A, and triacylglycerol lipase activities. The sequence is that of Envelope phospholipase OPG057 (OPG057) from Cynomys gunnisoni (Gunnison's prairie dog).